The following is a 518-amino-acid chain: uncharacterized protein (518 aa).

14 helical membrane passes run 13–33 (WAIS…GIIS), 49–69 (WGSW…PIVG), 86–106 (CLFG…LFLI), 109–129 (LIQA…ILAT), 141–161 (LLGA…SFLL), 169–189 (WLFL…ACFI), 202–222 (AAGI…MTNL), 231–251 (LGNP…AALI), 280–300 (LIIG…PSYV), 312–332 (GYWM…GGAL), 341–361 (TVIL…LWVT), 365–385 (EFVI…GAPL), 410–430 (IGLT…FDQI), and 493–513 (LYAA…IPAF).

This sequence belongs to the major facilitator superfamily. TCR/Tet family.

The protein localises to the cell membrane. This is an uncharacterized protein from Bacillus subtilis (strain 168).